A 1250-amino-acid polypeptide reads, in one-letter code: MEEVITIAQIVHRGTDILSLNNEEIEALVDEIYSTLKGSNDIKNIRLIDFLFSLKDFVNHVRAEQSKLPDLSMPMEAYIRQLLVNPDVVPIVSEKKKELRVRPSTRKEIFLINGTHLAVPAEVPIEIYGLKLRLKTFSPQCFMRMAEIGSFSPETLGYVASGANLTNFIRVFMKCVDQETWKKNGEGVVVTTKENIIQFTHQYIELYKFLRSGGHSWLINRLAEEMVHRKLDRENQGSHISSIIETEEVEPEEENIKRVIFFLKELSTMYSVFPVFTSGYMPLLYDLYRAGYLEVLWNPVEQKFLQHAEQREKEQMILQQVDMKLTEVTTQARQYFKIMEEKIGRVQSDTIREILTMEGKVDDPSSILQEVIKACGKQEAELITTEYLNIKKQWELQEKNACAHLKLVKQLRSGLQYAESLKVLESIRVLYKEKNNTTNWNLCKACGFKLLCPHVDMLIQLQAAEASYDTMRTKLMKFSGINKEKENNQGLIYSYFCKICGEELAHFIQEDRTADVGVIGDLNSKLRIFIWQETMKACTFIHFGKLVDVKQFANIAVNVCLPLIYSIENIKKEEDYDPLTQLYAVIYIYAYILNLIYSSQKNKEFLTITIHGMKADSSLNAYVTFLLEKMTQQYSGIINQLSEITDQWIANNFREAFKKIIHQNGLQGLSVQDDTKVLLTEILLDPLYDYAATVARIDGSIPMHKPRTPKEAEYEFKTVIGRTPAELLSQKEFYDKIYTSKYRPDFTQLARLNDVYFQEESLRVWWGGRDEEKISTLIYLRAYELFLKYLQNAPNFNSELAEFKKYENAYGEQKALLAQQGFYNIFDPNTGKADQRTRLFEYKKLPISTLYDEKGLPHKWTIYVYKAIDSSQKPAEIEVSRKDVIKKIDNHYALADLRCSVCHVLQHEVGQLNIKKVQTALKASLEFNTFYAFYESRCPKGGLHDFQDKKCIKCGLFTYIIYDHLSQPELVHDYYNNYKDQYEKEKMSIHSIQIKKDIAVPPTETQPKPQQKPWTFDYGKIIKTAKILDISPAVVEAIGAMEGRSYADIKEGQGAPPPPTSMDDPRLMAVDSAVRIFLYNYNCLRHISTFNKPPMHIERLVKHLSYEEKEDLEKVLPNVVNEYHTTFKQLRVTDPASALLYSIEFLCISFLTLYEIKEPSWVVNIVREFALTELNTIIQSEKLLSKPGAFNFMIFGEDFVCSGEDSSMDDISAYSSPGLFGEDIIDRLDDPFSIEDVDISLDVLDNLAPQ.

The protein belongs to the asfivirus M1249L family. As to quaternary structure, interacts with the minor capsid protein p17 and with the hexon capsid protein p72 capsomers; these interactions form a rigid zipper structure that stabilizes the capsomers. Interacts with host IRF3.

Its subcellular location is the virion. The protein localises to the host cytoplasm. In terms of biological role, together with the penton and the other minor capsid proteins (p17, p49), forms a complicated network immediately below the outer capsid shell, stabilizing the whole capsid. In addition, blocks IFN-beta transactivation mediated by the cGAS-STING pathway and regulates the transcriptional activity of IFN-beta. Mechanistically, suppresses the phosphorylation of host key adapter protein TBK1 and degrades host IRF3 in the cytoplasm. In Ornithodoros (relapsing fever ticks), this protein is Minor capsid protein M1249L.